A 987-amino-acid chain; its full sequence is Mitotic checkpoint serine/threonine-protein kinase bub-1 (987 aa).

Disordered regions lie at residues 278-385 and 574-599; these read RRRH…TSKS and LAAN…KDSS. Residues 350–364 show a composition bias toward basic and acidic residues; the sequence is ERLKIMTAGRKDGNP. Positions 368–380 are enriched in low complexity; it reads STSISSNYSTASA. Positions 575 to 587 are enriched in polar residues; it reads AANQAVQPSVTES. The span at 588–599 shows a compositional bias: basic and acidic residues; that stretch reads SKPERSDPKDSS. The 298-residue stretch at 690 to 987 folds into the Protein kinase domain; the sequence is LHIQTLIGQG…EACDLAANQK (298 aa). ATP contacts are provided by residues 696–704 and Lys-718; that span reads IGQGGYAKV. Asp-814 acts as the Proton acceptor in catalysis.

This sequence belongs to the protein kinase superfamily. Ser/Thr protein kinase family. BUB1 subfamily. In terms of assembly, interacts (via kinase domain) with mdf-1 (via coiled coil domain); the interaction recruits mdf-1 to unattached kinetochores during mitosis and between homologous chromosomes in early anaphase of meiosis I. May interact with bub-3; for localization at the kinetochore and the onset of anaphase.

Its subcellular location is the cytoplasm. The protein resides in the cell cortex. The protein localises to the nucleus. It is found in the chromosome. It localises to the centromere. Its subcellular location is the kinetochore. The catalysed reaction is L-seryl-[protein] + ATP = O-phospho-L-seryl-[protein] + ADP + H(+). It carries out the reaction L-threonyl-[protein] + ATP = O-phospho-L-threonyl-[protein] + ADP + H(+). Functionally, serine/threonine-protein kinase essential for spindle-assembly checkpoint signaling. Plays a key role in the recruitment of the checkpoint proteins bub-3, mdf-1 and mdf-2 to unattached kinetochores. mdf-1 recruitment is independent of bub-1 kinase activity. Has a role in the correct kinetochore localization of the spindly-like protein spdl-1. In addition, during meiotic anaphase I, controls the recruitment of hcp-1/2 and klp-19 to the ring-shaped domain formed between chromosomes. Involved in chromosome alignment, chromosome homolog segregation and spindle assembly. In association with bub-3 at the kinetochore region of chromosomes, promotes the onset on anaphase independently from spindle checkpoint signaling and promotes the formation of stable end-on bipolar attachments of chromosomes. Plays a role in nuclear envelope breakdown. Required maternally during embryogenesis and in the zygote for the postembryonic development of several tissues including ventral cord neurons, gonad, intestine and seam cells. The sequence is that of Mitotic checkpoint serine/threonine-protein kinase bub-1 from Caenorhabditis elegans.